The primary structure comprises 113 residues: Iron-sulfur cluster insertion protein ErpA (113 aa).

Positions 41, 105, and 107 each coordinate iron-sulfur cluster.

This sequence belongs to the HesB/IscA family. Homodimer. It depends on iron-sulfur cluster as a cofactor.

Required for insertion of 4Fe-4S clusters for at least IspG. In Glaesserella parasuis serovar 5 (strain SH0165) (Haemophilus parasuis), this protein is Iron-sulfur cluster insertion protein ErpA.